A 605-amino-acid chain; its full sequence is Elongation factor 4 (605 aa).

In terms of domain architecture, tr-type G spans 8–190; it reads RRVRNFCIVA…AIITRIPPPQ (183 aa). Residues 20 to 25 and 137 to 140 each bind GTP; these read DHGKST and NKID.

This sequence belongs to the TRAFAC class translation factor GTPase superfamily. Classic translation factor GTPase family. LepA subfamily.

The protein localises to the cell inner membrane. It catalyses the reaction GTP + H2O = GDP + phosphate + H(+). In terms of biological role, required for accurate and efficient protein synthesis under certain stress conditions. May act as a fidelity factor of the translation reaction, by catalyzing a one-codon backward translocation of tRNAs on improperly translocated ribosomes. Back-translocation proceeds from a post-translocation (POST) complex to a pre-translocation (PRE) complex, thus giving elongation factor G a second chance to translocate the tRNAs correctly. Binds to ribosomes in a GTP-dependent manner. The chain is Elongation factor 4 from Treponema pallidum (strain Nichols).